A 1036-amino-acid chain; its full sequence is Hexagonally packed intermediate-layer surface protein (1036 aa).

A signal peptide spans 1-17; it reads MKKNIALMALTGVLTLA. Disulfide bonds link Cys-74/Cys-86, Cys-256/Cys-275, and Cys-642/Cys-754.

Glycosylated; contains six glycans. Post-translationally, acylated in the N-terminal region. In terms of processing, the N-terminus is blocked.

It localises to the secreted. Its subcellular location is the cell wall. The protein localises to the S-layer. Functionally, shape maintenance, possible protection from noxious enzymes or exogenous and unsettling DNA, and may mediate homotypic cell-cell contacts. The sequence is that of Hexagonally packed intermediate-layer surface protein (hpi) from Deinococcus radiodurans.